The chain runs to 505 residues: Trans-cinnamate 4-monooxygenase (505 aa).

A helical transmembrane segment spans residues 3–23; the sequence is LLLLEKTLLGSFVAVLVAILV. (E)-cinnamate is bound by residues 213 to 218 and Ala-306; that span reads RSRLAQ. Cys-447 provides a ligand contact to heme.

It belongs to the cytochrome P450 family. Heme is required as a cofactor.

The protein resides in the membrane. The catalysed reaction is (E)-cinnamate + reduced [NADPH--hemoprotein reductase] + O2 = (E)-4-coumarate + oxidized [NADPH--hemoprotein reductase] + H2O + H(+). Its pathway is phenylpropanoid metabolism; trans-4-coumarate biosynthesis; trans-4-coumarate from trans-cinnamate: step 1/1. In terms of biological role, catalyzes the first oxidative step of the phenylpropanoid pathway in higher plants by transforming trans-cinnamate into p-coumarate. The compounds formed by this pathway are essential components for lignification, pollination, and defense against ultraviolet light, predators and pathogens. The polypeptide is Trans-cinnamate 4-monooxygenase (CYP73A16) (Populus kitakamiensis (Aspen)).